The primary structure comprises 388 residues: Succinate--CoA ligase [ADP-forming] subunit beta (388 aa).

The ATP-grasp domain maps to 9-244 (KELFRTYGIP…TDEEDPLEVE (236 aa)). ATP-binding positions include K46, 53 to 55 (GRG), E99, V102, and E107. Residues N199 and D213 each coordinate Mg(2+). Substrate-binding positions include N264 and 321-323 (GIL).

This sequence belongs to the succinate/malate CoA ligase beta subunit family. In terms of assembly, heterotetramer of two alpha and two beta subunits. Mg(2+) is required as a cofactor.

The enzyme catalyses succinate + ATP + CoA = succinyl-CoA + ADP + phosphate. It carries out the reaction GTP + succinate + CoA = succinyl-CoA + GDP + phosphate. Its pathway is carbohydrate metabolism; tricarboxylic acid cycle; succinate from succinyl-CoA (ligase route): step 1/1. In terms of biological role, succinyl-CoA synthetase functions in the citric acid cycle (TCA), coupling the hydrolysis of succinyl-CoA to the synthesis of either ATP or GTP and thus represents the only step of substrate-level phosphorylation in the TCA. The beta subunit provides nucleotide specificity of the enzyme and binds the substrate succinate, while the binding sites for coenzyme A and phosphate are found in the alpha subunit. This chain is Succinate--CoA ligase [ADP-forming] subunit beta, found in Desulfosudis oleivorans (strain DSM 6200 / JCM 39069 / Hxd3) (Desulfococcus oleovorans).